A 158-amino-acid polypeptide reads, in one-letter code: Transcriptional repressor NrdR (158 aa).

The interval 1–22 (MRCPYCGSEDTQVKDSRPAEDN) is disordered. The segment at 3-34 (CPYCGSEDTQVKDSRPAEDNTSIRRRRICPDC) is a zinc-finger region. A compositionally biased stretch (basic and acidic residues) spans 11 to 22 (TQVKDSRPAEDN). The ATP-cone domain occupies 49–139 (LMVIKKTGRK…VYRDFSLAED (91 aa)).

Belongs to the NrdR family. Zn(2+) is required as a cofactor.

Negatively regulates transcription of bacterial ribonucleotide reductase nrd genes and operons by binding to NrdR-boxes. This Rhizobium etli (strain CIAT 652) protein is Transcriptional repressor NrdR.